Here is a 126-residue protein sequence, read N- to C-terminus: uncharacterized protein (126 aa).

Positions 1-23 (MLKKLIMGFFLLILLGIAGVAVM) are cleaved as a signal peptide.

This is an uncharacterized protein from Archaeoglobus fulgidus (strain ATCC 49558 / DSM 4304 / JCM 9628 / NBRC 100126 / VC-16).